We begin with the raw amino-acid sequence, 59 residues long: Cecropin-B2 (59 aa).

A signal peptide spans 1 to 23 (MNFNKLFLIVILAALLLLGQTEA). At L57 the chain carries Leucine amide.

It belongs to the cecropin family.

It is found in the secreted. Cecropins have lytic and antibacterial activity against several Gram-positive and Gram-negative bacteria. This is Cecropin-B2 (CECB2) from Culex pipiens pipiens (Northern house mosquito).